The primary structure comprises 469 residues: Adenosylhomocysteinase (469 aa).

3 residues coordinate substrate: threonine 63, aspartate 139, and glutamate 164. Residue 165–167 (TTT) coordinates NAD(+). Residues lysine 194 and aspartate 198 each coordinate substrate. NAD(+) is bound by residues asparagine 199, 228-233 (GYGDVG), glutamate 251, asparagine 300, 321-323 (IGH), and asparagine 375.

It belongs to the adenosylhomocysteinase family. It depends on NAD(+) as a cofactor.

It localises to the cytoplasm. The catalysed reaction is S-adenosyl-L-homocysteine + H2O = L-homocysteine + adenosine. The protein operates within amino-acid biosynthesis; L-homocysteine biosynthesis; L-homocysteine from S-adenosyl-L-homocysteine: step 1/1. Functionally, may play a key role in the regulation of the intracellular concentration of adenosylhomocysteine. In Pseudomonas syringae pv. syringae (strain B728a), this protein is Adenosylhomocysteinase.